Here is a 307-residue protein sequence, read N- to C-terminus: Taste receptor type 2 member 41 (307 aa).

Residues 1 to 7 (MQAALTA) lie on the Extracellular side of the membrane. Residues 8-28 (FFMLFFSLLSLLGIAANGFIV) form a helical membrane-spanning segment. The Cytoplasmic portion of the chain corresponds to 29–40 (LVLGREWLQYGR). The helical transmembrane segment at 41 to 61 (LLPLDMILISLGVSRFCLQLV) threads the bilayer. Residues 62–88 (GTVYNFYYSAHKVEYSGGLSRQFFHLH) lie on the Extracellular side of the membrane. Residues 89–109 (WHFLNLATFXFCSWLSVLFCV) traverse the membrane as a helical segment. Residues 110-129 (KXANITHPTFLWLKWRFPGW) are Cytoplasmic-facing. A helical membrane pass occupies residues 130-150 (VPWLLLGSVLISFIITLLLFW). Residues 151–183 (VNYPVYQEFLIRKFSGNMTYEWNTRIEMYYLPS) lie on the Extracellular side of the membrane. Asn167 is a glycosylation site (N-linked (GlcNAc...) asparagine). A helical transmembrane segment spans residues 184 to 204 (LKLVIWSIPCSVFLVSIMLLI). The Cytoplasmic segment spans residues 205–234 (NSLRRHTWRMQHNGHSLQDPSTQAHTRAXK). A helical transmembrane segment spans residues 235–255 (SLISFLILYVLSFLSLIIDAT). The Extracellular portion of the chain corresponds to 256-264 (KFISMQNDF). The helical transmembrane segment at 265 to 285 (YWPWQTAVYLGVSVHPFILIF) threads the bilayer. The Cytoplasmic segment spans residues 286 to 307 (SNLKLRSVFWKLLLLARGFWVA).

Belongs to the G-protein coupled receptor T2R family.

It localises to the membrane. Functionally, receptor that may play a role in the perception of bitterness and is gustducin-linked. May play a role in sensing the chemical composition of the gastrointestinal content. The activity of this receptor may stimulate alpha gustducin, mediate PLC-beta-2 activation and lead to the gating of TRPM5. This chain is Taste receptor type 2 member 41 (TAS2R41), found in Pongo pygmaeus (Bornean orangutan).